Reading from the N-terminus, the 286-residue chain is Short-chain dehydrogenase fogD (286 aa).

Positions 8, 34, 55, 147, 151, 180, and 182 each coordinate NADP(+). The active-site Proton acceptor is Y147. Catalysis depends on K151, which acts as the Lowers pKa of active site Tyr.

This sequence belongs to the short-chain dehydrogenases/reductases (SDR) family.

It functions in the pathway secondary metabolite biosynthesis. Functionally, short-chain dehydrogenase; part of the gene cluster that mediates the biosynthesis of flavoglaucin and congeners (including aspergin, dihydroauroglaucin and auroglaucin), prenylated salicylaldehyde derivatives carrying a saturated or an unsaturated C-7 side chain. The PKS fogA releases the carboxylic acid (8E,10E,12E)-3,5,7-trihydroxytetradeca-8,10,12-trienoic acid as its product, as well as derivatives with one and two double bonds. FogA is indeed able to reduce the initial triketide, thus being at least partially responsible for the differently saturated heptyl side chains of flavoglaucin congeners. The oxidoreductases fogB, fogC and fogD modify the nascent polyketide in fogA-bound form and, together, fogA, fogB, fogC and fogD are necessary for the formation of the aromatic core and the cyclized PKS products are released as salicyl alcohols. In particular, fogB is responsible for oxidation of a hydroxyl group or reduction of remaining double bond(s) at the C-7 residue whereas fogD is probably involved in the reductive release of the modified PKS products. The cytochrome P450 monooxygenase fogE is then responsible for the hydroxylation at C-3 of the benzene ring. The fogE products are substrates of the prenyltransferase fogH and the prenylated benzyl alcohols are subsequently oxidized by the fogF to produce the final aryl aldehydes flavoglaucin and congeners. The short-chain dehydrogenase fogG does not seem to be involved in the biosynthesis of the prenylated salicylaldehyde derivatives. In Aspergillus ruber (strain CBS 135680), this protein is Short-chain dehydrogenase fogD.